We begin with the raw amino-acid sequence, 307 residues long: UDP-3-O-acyl-N-acetylglucosamine deacetylase (307 aa).

3 residues coordinate Zn(2+): H78, H241, and D245. Catalysis depends on H268, which acts as the Proton donor.

This sequence belongs to the LpxC family. The cofactor is Zn(2+).

The enzyme catalyses a UDP-3-O-[(3R)-3-hydroxyacyl]-N-acetyl-alpha-D-glucosamine + H2O = a UDP-3-O-[(3R)-3-hydroxyacyl]-alpha-D-glucosamine + acetate. It functions in the pathway glycolipid biosynthesis; lipid IV(A) biosynthesis; lipid IV(A) from (3R)-3-hydroxytetradecanoyl-[acyl-carrier-protein] and UDP-N-acetyl-alpha-D-glucosamine: step 2/6. Functionally, catalyzes the hydrolysis of UDP-3-O-myristoyl-N-acetylglucosamine to form UDP-3-O-myristoylglucosamine and acetate, the committed step in lipid A biosynthesis. The polypeptide is UDP-3-O-acyl-N-acetylglucosamine deacetylase (Bordetella bronchiseptica (strain ATCC BAA-588 / NCTC 13252 / RB50) (Alcaligenes bronchisepticus)).